The following is a 955-amino-acid chain: Translation initiation factor IF-2 (955 aa).

The tract at residues 49–352 (AFSQSSESTE…QAPSFGGVKI (304 aa)) is disordered. Low complexity predominate over residues 77–88 (PQQQTKASAPSA). Pro residues-rich tracts occupy residues 95–121 (PAVP…PGPR), 149–159 (RPVPKPGPRPG), 188–202 (RPGP…PPRP), and 209–223 (PPRP…PRPG). The span at 225 to 235 (GTAGGRPGSSA) shows a compositional bias: gly residues. A compositionally biased stretch (pro residues) spans 238–264 (PPRPVPRPGPRPSPMNMPASRPTPPGG). Positions 273–322 (SGGGRGRGGGGGAGPRGGGAGGGAPRTGFGGRPGGGRGRGGTAGAFGRPG) are enriched in gly residues. The segment covering 326–335 (SRSRKSKKQR) has biased composition (basic residues). A tr-type G domain is found at 448-620 (PRAPVVTVMG…IILTADAELD (173 aa)). The segment at 457–464 (GHVDHGKT) is G1. 457–464 (GHVDHGKT) serves as a coordination point for GTP. The G2 stretch occupies residues 482-486 (GITQH). The G3 stretch occupies residues 507-510 (DTPG). GTP contacts are provided by residues 507–511 (DTPGH) and 561–564 (NKID). Positions 561 to 564 (NKID) are G4. The segment at 597-599 (SAK) is G5.

This sequence belongs to the TRAFAC class translation factor GTPase superfamily. Classic translation factor GTPase family. IF-2 subfamily.

The protein resides in the cytoplasm. Functionally, one of the essential components for the initiation of protein synthesis. Protects formylmethionyl-tRNA from spontaneous hydrolysis and promotes its binding to the 30S ribosomal subunits. Also involved in the hydrolysis of GTP during the formation of the 70S ribosomal complex. The sequence is that of Translation initiation factor IF-2 from Thermobifida fusca (strain YX).